The primary structure comprises 482 residues: Transcription initiation factor IIE subunit alpha (482 aa).

Residues 9 to 99 (VKNLLKFVVR…KYPHAIDAIK (91 aa)) enclose the HTH TFE/IIEalpha-type domain. The segment at 124–152 (CPICLTKYTQLEAVQLLNFDRTEFLCSLC) adopts a C4-type zinc-finger fold. Residues 274–286 (RELQERQAEEKRK) are compositionally biased toward basic and acidic residues. 2 disordered regions span residues 274-295 (RELQERQAEEKRKQNAVPEWHK) and 321-482 (AMDS…FEDV). Polar residues predominate over residues 321-345 (AMDSINPDNEPAQETSYQNNRTLTE). A compositionally biased stretch (acidic residues) spans 374–401 (EEEEEEEEEEDEEEEEEEEMEDVMDDND). Residues 419–432 (TAGTAKTESNTSND) show a composition bias toward polar residues. Basic and acidic residues predominate over residues 433 to 444 (VKQESINDKTED). Residues 464–482 (GDDDDDDDDDEMDIEFEDV) show a composition bias toward acidic residues.

The protein belongs to the TFIIE alpha subunit family. In terms of assembly, TFIIE is a tetramer of two alpha (TFA1) and two beta (TFA2) subunits.

The protein localises to the nucleus. Recruits TFIIH to the initiation complex and stimulates the RNA polymerase II C-terminal domain kinase and DNA-dependent ATPase activities of TFIIH. Both TFIIH and TFIIE are required for promoter clearance by RNA polymerase. This chain is Transcription initiation factor IIE subunit alpha (TFA1), found in Saccharomyces cerevisiae (strain ATCC 204508 / S288c) (Baker's yeast).